Here is a 202-residue protein sequence, read N- to C-terminus: Peptidyl-tRNA hydrolase (202 aa).

Tyr14 provides a ligand contact to tRNA. His19 (proton acceptor) is an active-site residue. TRNA-binding residues include Tyr64, Asn66, and Asn112.

The protein belongs to the PTH family. In terms of assembly, monomer.

Its subcellular location is the cytoplasm. The catalysed reaction is an N-acyl-L-alpha-aminoacyl-tRNA + H2O = an N-acyl-L-amino acid + a tRNA + H(+). Its function is as follows. Hydrolyzes ribosome-free peptidyl-tRNAs (with 1 or more amino acids incorporated), which drop off the ribosome during protein synthesis, or as a result of ribosome stalling. In terms of biological role, catalyzes the release of premature peptidyl moieties from peptidyl-tRNA molecules trapped in stalled 50S ribosomal subunits, and thus maintains levels of free tRNAs and 50S ribosomes. This Nitrobacter winogradskyi (strain ATCC 25391 / DSM 10237 / CIP 104748 / NCIMB 11846 / Nb-255) protein is Peptidyl-tRNA hydrolase.